The chain runs to 230 residues: 5'-methylthioadenosine/S-adenosylhomocysteine nucleosidase (230 aa).

The active-site Proton acceptor is Glu12. Substrate-binding positions include Gly78, Ile153, and 174–175 (ME). Catalysis depends on Asp198, which acts as the Proton donor.

Belongs to the PNP/UDP phosphorylase family. MtnN subfamily.

It catalyses the reaction S-adenosyl-L-homocysteine + H2O = S-(5-deoxy-D-ribos-5-yl)-L-homocysteine + adenine. The catalysed reaction is S-methyl-5'-thioadenosine + H2O = 5-(methylsulfanyl)-D-ribose + adenine. The enzyme catalyses 5'-deoxyadenosine + H2O = 5-deoxy-D-ribose + adenine. It participates in amino-acid biosynthesis; L-methionine biosynthesis via salvage pathway; S-methyl-5-thio-alpha-D-ribose 1-phosphate from S-methyl-5'-thioadenosine (hydrolase route): step 1/2. In terms of biological role, catalyzes the irreversible cleavage of the glycosidic bond in both 5'-methylthioadenosine (MTA) and S-adenosylhomocysteine (SAH/AdoHcy) to adenine and the corresponding thioribose, 5'-methylthioribose and S-ribosylhomocysteine, respectively. Also cleaves 5'-deoxyadenosine, a toxic by-product of radical S-adenosylmethionine (SAM) enzymes, into 5-deoxyribose and adenine. This Shewanella pealeana (strain ATCC 700345 / ANG-SQ1) protein is 5'-methylthioadenosine/S-adenosylhomocysteine nucleosidase.